Reading from the N-terminus, the 224-residue chain is Ribonuclease 3 (224 aa).

Positions 4–127 (IEKLEQSLTY…IIGAIHLEAG (124 aa)) constitute an RNase III domain. Mg(2+) is bound at residue Glu-40. Asp-44 is an active-site residue. Residues Asp-113 and Glu-116 each contribute to the Mg(2+) site. Glu-116 is an active-site residue. One can recognise a DRBM domain in the interval 154-223 (DYKTKLQEIT…AKIALEKLGA (70 aa)).

This sequence belongs to the ribonuclease III family. In terms of assembly, homodimer. Mg(2+) serves as cofactor.

It localises to the cytoplasm. It carries out the reaction Endonucleolytic cleavage to 5'-phosphomonoester.. In terms of biological role, digests double-stranded RNA. Involved in the processing of primary rRNA transcript to yield the immediate precursors to the large and small rRNAs (23S and 16S). Also processes some mRNAs, and tRNAs when they are encoded in the rRNA operon. Its function is as follows. CRISPR (clustered regularly interspaced short palindromic repeat) is an adaptive immune system that provides protection against mobile genetic elements (viruses, transposable elements and conjugative plasmids). CRISPR clusters contain spacers, sequences complementary to antecedent mobile elements, and target invading nucleic acids. CRISPR clusters are transcribed and processed into CRISPR RNA (crRNA). In this organism endogenous ribonuclease 3 and Cas9 are required for correct coprocessing of pre-crRNA and the trans-encoded small RNA (tracrRNA). Cas9, crRNA and tracrRNA are required for cleavage of invading DNA. Complements pre-crRNA and tracrRNA coprocessing defects in an rnc deletion in S.pyogenes strain 370. In Campylobacter jejuni subsp. jejuni serotype O:2 (strain ATCC 700819 / NCTC 11168), this protein is Ribonuclease 3.